The chain runs to 356 residues: Cobalt-precorrin-5B C(1)-methyltransferase (356 aa).

The protein belongs to the CbiD family.

The catalysed reaction is Co-precorrin-5B + S-adenosyl-L-methionine = Co-precorrin-6A + S-adenosyl-L-homocysteine. It functions in the pathway cofactor biosynthesis; adenosylcobalamin biosynthesis; cob(II)yrinate a,c-diamide from sirohydrochlorin (anaerobic route): step 6/10. In terms of biological role, catalyzes the methylation of C-1 in cobalt-precorrin-5B to form cobalt-precorrin-6A. The sequence is that of Cobalt-precorrin-5B C(1)-methyltransferase from Citrifermentans bemidjiense (strain ATCC BAA-1014 / DSM 16622 / JCM 12645 / Bem) (Geobacter bemidjiensis).